The chain runs to 150 residues: Large ribosomal subunit protein bL9 (150 aa).

It belongs to the bacterial ribosomal protein bL9 family.

Functionally, binds to the 23S rRNA. This Albidiferax ferrireducens (strain ATCC BAA-621 / DSM 15236 / T118) (Rhodoferax ferrireducens) protein is Large ribosomal subunit protein bL9.